The sequence spans 550 residues: Arginine--tRNA ligase (550 aa).

Positions 130–140 (ANPTGPIHIGG) match the 'HIGH' region motif.

This sequence belongs to the class-I aminoacyl-tRNA synthetase family. As to quaternary structure, monomer.

It is found in the cytoplasm. The enzyme catalyses tRNA(Arg) + L-arginine + ATP = L-arginyl-tRNA(Arg) + AMP + diphosphate. The protein is Arginine--tRNA ligase (argS) of Mycolicibacterium smegmatis (strain ATCC 700084 / mc(2)155) (Mycobacterium smegmatis).